The chain runs to 56 residues: UPF0339 protein NMA1193/NMA1859 (56 aa).

Belongs to the UPF0339 family.

The chain is UPF0339 protein NMA1193/NMA1859 from Neisseria meningitidis serogroup A / serotype 4A (strain DSM 15465 / Z2491).